The following is a 249-amino-acid chain: 1-(5-phosphoribosyl)-5-[(5-phosphoribosylamino)methylideneamino] imidazole-4-carboxamide isomerase (249 aa).

Asp8 functions as the Proton acceptor in the catalytic mechanism. The Proton donor role is filled by Asp129.

The protein belongs to the HisA/HisF family.

It is found in the cytoplasm. It carries out the reaction 1-(5-phospho-beta-D-ribosyl)-5-[(5-phospho-beta-D-ribosylamino)methylideneamino]imidazole-4-carboxamide = 5-[(5-phospho-1-deoxy-D-ribulos-1-ylimino)methylamino]-1-(5-phospho-beta-D-ribosyl)imidazole-4-carboxamide. It participates in amino-acid biosynthesis; L-histidine biosynthesis; L-histidine from 5-phospho-alpha-D-ribose 1-diphosphate: step 4/9. The protein is 1-(5-phosphoribosyl)-5-[(5-phosphoribosylamino)methylideneamino] imidazole-4-carboxamide isomerase of Rhizobium rhizogenes (strain K84 / ATCC BAA-868) (Agrobacterium radiobacter).